Reading from the N-terminus, the 642-residue chain is Threonine--tRNA ligase (642 aa).

The region spanning 1 to 61 is the TGS domain; it reads MPVITLPDGS…ENDAQLAIIT (61 aa). The interval 243 to 534 is catalytic; the sequence is DHRKIGKQLD…LTEEFAGFFP (292 aa). Lys286 is subject to N6-acetyllysine. Cys334, His385, and His511 together coordinate Zn(2+).

The protein belongs to the class-II aminoacyl-tRNA synthetase family. As to quaternary structure, homodimer. It depends on Zn(2+) as a cofactor.

The protein resides in the cytoplasm. It catalyses the reaction tRNA(Thr) + L-threonine + ATP = L-threonyl-tRNA(Thr) + AMP + diphosphate + H(+). In terms of biological role, catalyzes the attachment of threonine to tRNA(Thr) in a two-step reaction: L-threonine is first activated by ATP to form Thr-AMP and then transferred to the acceptor end of tRNA(Thr). Also edits incorrectly charged L-seryl-tRNA(Thr). The sequence is that of Threonine--tRNA ligase from Escherichia fergusonii (strain ATCC 35469 / DSM 13698 / CCUG 18766 / IAM 14443 / JCM 21226 / LMG 7866 / NBRC 102419 / NCTC 12128 / CDC 0568-73).